The primary structure comprises 577 residues: Heavy metal-associated isoprenylated plant protein 34 (577 aa).

The 64-residue stretch at 9 to 72 folds into the HMA domain; the sequence is LQTCVLKVNV…KLSKSGKHAE (64 aa). 2 residues coordinate a metal cation: Cys20 and Cys23. Residues 77–87 are compositionally biased toward gly residues; sequence GGGGGGGGGKG. Disordered regions lie at residues 77–136 and 150–451; these read GGGG…QPMQ and AAHG…GPGG. The segment covering 97–106 has biased composition (low complexity); it reads NLNMGGNNKP. Gly residues predominate over residues 118 to 129; the sequence is KAGGGGGGGQNH. A compositionally biased stretch (basic and acidic residues) spans 168 to 177; that stretch reads KDQKKSVKFA. The span at 178–213 shows a compositional bias: acidic residues; the sequence is DDEDDEFSEDDYDDEDFSEDDYDDDEFDDDEDDDDE. Over residues 227–244 the composition is skewed to low complexity; it reads HMPPNKMMMPNKMMPQMG. Gly residues-rich tracts occupy residues 245–254 and 266–281; these read GHHGNGGGPK and FKGG…GGGF. Basic and acidic residues-rich tracts occupy residues 294-326 and 344-358; these read KNGK…KTDA and NGDE…DGHG. Gly residues-rich tracts occupy residues 379–392 and 420–451; these read KKGG…GHGG and GIGG…GPGG. Position 574 is a cysteine methyl ester (Cys574). Cys574 carries S-farnesyl cysteine lipidation. Residues 575-577 constitute a propeptide, removed in mature form; it reads SIM.

The protein belongs to the HIPP family.

In terms of biological role, heavy-metal-binding protein. This is Heavy metal-associated isoprenylated plant protein 34 from Arabidopsis thaliana (Mouse-ear cress).